Consider the following 37-residue polypeptide: Cytochrome b6-f complex subunit 5 (37 aa).

A helical transmembrane segment spans residues 5-25 (LLCGIVLGLIPVTLAGLFFAA).

It belongs to the PetG family. The 4 large subunits of the cytochrome b6-f complex are cytochrome b6, subunit IV (17 kDa polypeptide, PetD), cytochrome f and the Rieske protein, while the 4 small subunits are PetG, PetL, PetM and PetN. The complex functions as a dimer.

The protein localises to the cellular thylakoid membrane. Component of the cytochrome b6-f complex, which mediates electron transfer between photosystem II (PSII) and photosystem I (PSI), cyclic electron flow around PSI, and state transitions. PetG is required for either the stability or assembly of the cytochrome b6-f complex. This is Cytochrome b6-f complex subunit 5 from Thermosynechococcus vestitus (strain NIES-2133 / IAM M-273 / BP-1).